The sequence spans 258 residues: Imidazole glycerol phosphate synthase subunit HisF (258 aa).

Active-site residues include Asp-11 and Asp-130.

This sequence belongs to the HisA/HisF family. Heterodimer of HisH and HisF.

It localises to the cytoplasm. It carries out the reaction 5-[(5-phospho-1-deoxy-D-ribulos-1-ylimino)methylamino]-1-(5-phospho-beta-D-ribosyl)imidazole-4-carboxamide + L-glutamine = D-erythro-1-(imidazol-4-yl)glycerol 3-phosphate + 5-amino-1-(5-phospho-beta-D-ribosyl)imidazole-4-carboxamide + L-glutamate + H(+). The protein operates within amino-acid biosynthesis; L-histidine biosynthesis; L-histidine from 5-phospho-alpha-D-ribose 1-diphosphate: step 5/9. IGPS catalyzes the conversion of PRFAR and glutamine to IGP, AICAR and glutamate. The HisF subunit catalyzes the cyclization activity that produces IGP and AICAR from PRFAR using the ammonia provided by the HisH subunit. The chain is Imidazole glycerol phosphate synthase subunit HisF from Pectobacterium carotovorum subsp. carotovorum (strain PC1).